Here is a 64-residue protein sequence, read N- to C-terminus: Large ribosomal subunit protein bL35 (64 aa).

Belongs to the bacterial ribosomal protein bL35 family.

The polypeptide is Large ribosomal subunit protein bL35 (Vibrio atlanticus (strain LGP32) (Vibrio splendidus (strain Mel32))).